The chain runs to 357 residues: 3-isopropylmalate dehydrogenase (357 aa).

Substrate is bound by residues Arg-97, Arg-107, Arg-135, and Asp-224. Residues Asp-224, Asp-248, and Asp-252 each contribute to the Mg(2+) site. Position 282-294 (282-294 (GSAPDIAGQDKAN)) interacts with NAD(+).

Belongs to the isocitrate and isopropylmalate dehydrogenases family. LeuB type 1 subfamily. In terms of assembly, homodimer. Requires Mg(2+) as cofactor. Mn(2+) serves as cofactor.

The protein localises to the cytoplasm. The enzyme catalyses (2R,3S)-3-isopropylmalate + NAD(+) = 4-methyl-2-oxopentanoate + CO2 + NADH. It participates in amino-acid biosynthesis; L-leucine biosynthesis; L-leucine from 3-methyl-2-oxobutanoate: step 3/4. Catalyzes the oxidation of 3-carboxy-2-hydroxy-4-methylpentanoate (3-isopropylmalate) to 3-carboxy-4-methyl-2-oxopentanoate. The product decarboxylates to 4-methyl-2 oxopentanoate. The polypeptide is 3-isopropylmalate dehydrogenase (Parasynechococcus marenigrum (strain WH8102)).